A 352-amino-acid chain; its full sequence is Quinolinate synthase (352 aa).

Residues His48 and Ser69 each contribute to the iminosuccinate site. A [4Fe-4S] cluster-binding site is contributed by Cys114. Iminosuccinate contacts are provided by residues 140–142 (YAN) and Ser157. Residue Cys201 coordinates [4Fe-4S] cluster. Iminosuccinate is bound by residues 227-229 (HPE) and Thr244. [4Fe-4S] cluster is bound at residue Cys298.

The protein belongs to the quinolinate synthase family. Type 1 subfamily. [4Fe-4S] cluster is required as a cofactor.

The protein localises to the cytoplasm. The enzyme catalyses iminosuccinate + dihydroxyacetone phosphate = quinolinate + phosphate + 2 H2O + H(+). It functions in the pathway cofactor biosynthesis; NAD(+) biosynthesis; quinolinate from iminoaspartate: step 1/1. Its function is as follows. Catalyzes the condensation of iminoaspartate with dihydroxyacetone phosphate to form quinolinate. The sequence is that of Quinolinate synthase from Ectopseudomonas mendocina (strain ymp) (Pseudomonas mendocina).